The primary structure comprises 366 residues: tRNA/tmRNA (uracil-C(5))-methyltransferase (366 aa).

The S-adenosyl-L-methionine site is built by Q190, Y218, N223, E239, and D299. C324 (nucleophile) is an active-site residue. E358 functions as the Proton acceptor in the catalytic mechanism.

This sequence belongs to the class I-like SAM-binding methyltransferase superfamily. RNA M5U methyltransferase family. TrmA subfamily.

The catalysed reaction is uridine(54) in tRNA + S-adenosyl-L-methionine = 5-methyluridine(54) in tRNA + S-adenosyl-L-homocysteine + H(+). The enzyme catalyses uridine(341) in tmRNA + S-adenosyl-L-methionine = 5-methyluridine(341) in tmRNA + S-adenosyl-L-homocysteine + H(+). Its function is as follows. Dual-specificity methyltransferase that catalyzes the formation of 5-methyluridine at position 54 (m5U54) in all tRNAs, and that of position 341 (m5U341) in tmRNA (transfer-mRNA). This is tRNA/tmRNA (uracil-C(5))-methyltransferase from Salmonella typhi.